The primary structure comprises 504 residues: Putative F-box/FBD/LRR-repeat protein At3g59240 (504 aa).

The region spanning Lys7–Ser60 is the F-box domain. 7 LRR repeats span residues His69–Cys95, Arg145–Ser171, Trp173–Asp198, Thr286–Cys312, Asp329–Gly354, Cys369–Glu396, and Asp403–Tyr428. The 46-residue stretch at Ser382–His427 folds into the FBD domain.

This chain is Putative F-box/FBD/LRR-repeat protein At3g59240, found in Arabidopsis thaliana (Mouse-ear cress).